Reading from the N-terminus, the 152-residue chain is Transcriptional repressor NrdR (152 aa).

A zinc finger lies at 3 to 34; the sequence is CPFCNHGELKVIDSRNSPEANAIKRRRECLRC. Residues 48 to 138 enclose the ATP-cone domain; it reads IQVLKRDGRY…VYRRFRDVGE (91 aa).

It belongs to the NrdR family. Requires Zn(2+) as cofactor.

Negatively regulates transcription of bacterial ribonucleotide reductase nrd genes and operons by binding to NrdR-boxes. The protein is Transcriptional repressor NrdR of Chlamydia muridarum (strain MoPn / Nigg).